A 250-amino-acid chain; its full sequence is MPTVSMRDMLQAGVHFGHQTRYWNPKMGQYIFGARNKIHIINLEHTVPAFNDALAVIKQMASQKKKVLFVGTKRAAQKTVKEQAERAGMPYVSNRWLGGMLTNYKTIRGSIRSYRDLETQSQDGTFEKLTKKEALMRTRTMDKLELSIGGIKDMGGLPDAMFVIDVEHERIAIQEANKLGIPVIGVVDTNSDPAGVDYVIPGNDDAIRAIKLYVTAMADACLEGAREGSPAAAADEFVEVESEEKVANNG.

This sequence belongs to the universal ribosomal protein uS2 family.

The chain is Small ribosomal subunit protein uS2 from Teredinibacter turnerae (strain ATCC 39867 / T7901).